The chain runs to 1021 residues: Transmembrane protein 132A (1021 aa).

Positions 1–32 (MTERAAAAPRGPYGAWLCLLVALALEVVRVGS) are cleaved as a signal peptide. The Extracellular segment spans residues 33 to 848 (NQNTLDPIYL…VTDLELGMYA (816 aa)). A disordered region spans residues 207–226 (PAGEGPGGCGPGTEEEPKEQ). An N-linked (GlcNAc...) asparagine glycan is attached at N276. The binds to HSPA5/GRP78 stretch occupies residues 606 to 913 (IEVRSPLSDS…QLDRCSSSSP (308 aa)). The confers cellular localization similar to full-length form stretch occupies residues 666–1021 (LPAPKQEVAL…NYMERIRGSS (356 aa)). Residues 793 to 835 (AGDMGSHVGPGIRGKFERAEEEAGKEENEAKEEEEDEEEMVPA) form a disordered region. Basic and acidic residues predominate over residues 806–820 (GKFERAEEEAGKEEN). Residues 821-832 (EAKEEEEDEEEM) are compositionally biased toward acidic residues. The chain crosses the membrane as a helical span at residues 849-869 (LLGIFCLAFLIFLVNGVVFVL). The Cytoplasmic portion of the chain corresponds to 870 to 1021 (RYQRKEPPDS…NYMERIRGSS (152 aa)). The disordered stretch occupies residues 903–955 (RQLDRCSSSSPPKGEGGCPCESGAGGDTSTVAPSASESPAGSTSTLARKEAGG). The span at 929-948 (DTSTVAPSASESPAGSTSTL) shows a compositional bias: polar residues.

The protein belongs to the TMEM132 family. As to quaternary structure, interacts with HSPA5/GRP78. In terms of tissue distribution, expressed in the brain in neuronal cells of the hypothalamus, thalamus, cerebral cortex, amygdala, and cerebellum.

It is found in the golgi apparatus membrane. It localises to the endoplasmic reticulum membrane. In terms of biological role, may play a role in embryonic and postnatal development of the brain. Increased resistance to cell death induced by serum starvation in cultured cells. Regulates cAMP-induced GFAP gene expression via STAT3 phosphorylation. The protein is Transmembrane protein 132A (Tmem132a) of Rattus norvegicus (Rat).